Consider the following 290-residue polypeptide: Poly-beta-1,6-N-acetyl-D-glucosamine N-deacetylase (290 aa).

The signal sequence occupies residues 1-28 (MKYRKLIILVLSILIILPVSTLDGHHIA). Residues 114-290 (RSVWINFDDM…KRWDGFHEKD (177 aa)) form the NodB homology domain.

Belongs to the polysaccharide deacetylase family.

The protein resides in the secreted. It localises to the cell wall. In terms of biological role, catalyzes the N-deacetylation of poly-beta-1,6-N-acetyl-D-glucosamine (PNAG, also referred to as PIA), a biofilm adhesin polysaccharide. N-deacetylation is crucial for attachment of the polysaccharide to the bacterial cell surface; it leads to the introduction of positive charges in the otherwise neutral PIA polymer, allowing electrostatic interactions. This is Poly-beta-1,6-N-acetyl-D-glucosamine N-deacetylase (icaB) from Staphylococcus aureus (strain MRSA252).